Consider the following 23-residue polypeptide: M-poneritoxin-Nc1a (23 aa).

This sequence belongs to the non-disulfide-bridged peptide (NDBP) superfamily. Medium-length antimicrobial peptide (group 3) family. Ponericin-W subfamily. Expressed by the venom gland.

Its subcellular location is the secreted. The protein localises to the target cell membrane. Membrane-perturbating peptide with multiple activities. It is insecticidal, since it induces contractile paralysis in insects (L.cuprina) during several hours, and death after 24 hours. It shows antibacterial activity with higher activity against Gram-positive than Gram-negative bacteria. It is also antiparasitic, since it potently inhibits the larval development of the major pathogenic nematode of ruminants (H.contortus, IC(50)=5.1 uM), but fails to reduce the motility of adult males of the other nematode B.malayi. It also shows cytotoxic activity against HEK293 cells (EC(50)=12-14 uM) and induces hemolysis in human erythrocytes (EC(50)=28.6-48.2 uM). In addition, it causes an important increase in intracellular calcium concentration on neuronal and epithelial cell lines, which supports a non-specific membrane perturbation mechanism of action. In vivo, it induces pain by intraplantar injection into mice, suggesting a defensive function against vertebrate predators. In Neoponera commutata (Large hunting ant), this protein is M-poneritoxin-Nc1a.